Consider the following 206-residue polypeptide: Shieldin complex subunit 1 (206 aa).

Positions Ser27 to Asp94 are disordered. Residues Ser32–Ser55 are compositionally biased toward low complexity. Residues Thr56 to Ser74 show a composition bias toward polar residues.

As to quaternary structure, component of the shieldin complex, consisting of SHLD1, SHLD2, SHLD3 and MAD2L2/REV7. Within the complex, SHLD2 forms a scaffold which interacts with a SHLD3-MAD2L2 subcomplex via its N-terminus, and with SHLD1 via its C-terminus. Interacts with ASTE1.

It localises to the chromosome. In terms of biological role, component of the shieldin complex, which plays an important role in repair of DNA double-stranded breaks (DSBs). During G1 and S phase of the cell cycle, the complex functions downstream of TP53BP1 to promote non-homologous end joining (NHEJ) and suppress DNA end resection. Mediates various NHEJ-dependent processes including immunoglobulin class-switch recombination, and fusion of unprotected telomeres. The protein is Shieldin complex subunit 1 of Mus musculus (Mouse).